Here is a 248-residue protein sequence, read N- to C-terminus: Inner membrane protein pE248R (248 aa).

The N-myristoyl glycine; by host moiety is linked to residue Gly2. Residues 2-199 (GGSTSKNSFK…ADAISAVFKN (198 aa)) are Cytoplasmic-facing. The helical transmembrane segment at 200 to 220 (IMVAAVVIVLIIVGFIAVFYF) threads the bilayer. At 221–248 (LHSRHRHEEEEEAEPLISNKVLKNAAVS) the chain is on the extracellular side.

Belongs to the asfivirus E248R family. In terms of assembly, interacts with A151R.

The protein resides in the host membrane. It localises to the virion membrane. Essential for viral fusion with host endosomal membrane and core release. The protein is Inner membrane protein pE248R of Ornithodoros (relapsing fever ticks).